An 82-amino-acid polypeptide reads, in one-letter code: ATP synthase subunit c (82 aa).

2 helical membrane passes run Leu7–Ile27 and Phe53–Phe73.

It belongs to the ATPase C chain family. As to quaternary structure, F-type ATPases have 2 components, F(1) - the catalytic core - and F(0) - the membrane proton channel. F(1) has five subunits: alpha(3), beta(3), gamma(1), delta(1), epsilon(1). F(0) has three main subunits: a(1), b(2) and c(10-14). The alpha and beta chains form an alternating ring which encloses part of the gamma chain. F(1) is attached to F(0) by a central stalk formed by the gamma and epsilon chains, while a peripheral stalk is formed by the delta and b chains.

It localises to the cell inner membrane. Its function is as follows. F(1)F(0) ATP synthase produces ATP from ADP in the presence of a proton or sodium gradient. F-type ATPases consist of two structural domains, F(1) containing the extramembraneous catalytic core and F(0) containing the membrane proton channel, linked together by a central stalk and a peripheral stalk. During catalysis, ATP synthesis in the catalytic domain of F(1) is coupled via a rotary mechanism of the central stalk subunits to proton translocation. Functionally, key component of the F(0) channel; it plays a direct role in translocation across the membrane. A homomeric c-ring of between 10-14 subunits forms the central stalk rotor element with the F(1) delta and epsilon subunits. This chain is ATP synthase subunit c, found in Acidovorax ebreus (strain TPSY) (Diaphorobacter sp. (strain TPSY)).